A 520-amino-acid polypeptide reads, in one-letter code: Maturase K (520 aa).

The protein belongs to the intron maturase 2 family. MatK subfamily.

It is found in the plastid. Its subcellular location is the chloroplast. Usually encoded in the trnK tRNA gene intron. Probably assists in splicing its own and other chloroplast group II introns. In Linum perenne (Perennial flax), this protein is Maturase K.